The primary structure comprises 357 residues: Glycerol-1-phosphate dehydrogenase [NAD(P)+] (357 aa).

NAD(+) contacts are provided by residues 104–108 (GKTID) and 126–129 (TAAS). A substrate-binding site is contributed by D131. An NAD(+)-binding site is contributed by S135. D178 contacts substrate. The Zn(2+) site is built by D178 and H258. H262 is a binding site for substrate. H274 lines the Zn(2+) pocket.

It belongs to the glycerol-1-phosphate dehydrogenase family. Zn(2+) is required as a cofactor.

The protein localises to the cytoplasm. The catalysed reaction is sn-glycerol 1-phosphate + NAD(+) = dihydroxyacetone phosphate + NADH + H(+). The enzyme catalyses sn-glycerol 1-phosphate + NADP(+) = dihydroxyacetone phosphate + NADPH + H(+). Its pathway is membrane lipid metabolism; glycerophospholipid metabolism. Functionally, catalyzes the NAD(P)H-dependent reduction of dihydroxyacetonephosphate (DHAP or glycerone phosphate) to glycerol 1-phosphate (G1P). The G1P thus generated is used as the glycerophosphate backbone of phospholipids in the cellular membranes of Archaea. In Methanococcoides burtonii (strain DSM 6242 / NBRC 107633 / OCM 468 / ACE-M), this protein is Glycerol-1-phosphate dehydrogenase [NAD(P)+].